Reading from the N-terminus, the 355-residue chain is UDP-N-acetylglucosamine--N-acetylmuramyl-(pentapeptide) pyrophosphoryl-undecaprenol N-acetylglucosamine transferase (355 aa).

Residues 15–17 (TGG), Asn-127, Arg-163, Ser-191, Ile-244, 263–268 (ALTVSE), and Gln-288 each bind UDP-N-acetyl-alpha-D-glucosamine.

The protein belongs to the glycosyltransferase 28 family. MurG subfamily.

Its subcellular location is the cell inner membrane. The catalysed reaction is di-trans,octa-cis-undecaprenyl diphospho-N-acetyl-alpha-D-muramoyl-L-alanyl-D-glutamyl-meso-2,6-diaminopimeloyl-D-alanyl-D-alanine + UDP-N-acetyl-alpha-D-glucosamine = di-trans,octa-cis-undecaprenyl diphospho-[N-acetyl-alpha-D-glucosaminyl-(1-&gt;4)]-N-acetyl-alpha-D-muramoyl-L-alanyl-D-glutamyl-meso-2,6-diaminopimeloyl-D-alanyl-D-alanine + UDP + H(+). It participates in cell wall biogenesis; peptidoglycan biosynthesis. Functionally, cell wall formation. Catalyzes the transfer of a GlcNAc subunit on undecaprenyl-pyrophosphoryl-MurNAc-pentapeptide (lipid intermediate I) to form undecaprenyl-pyrophosphoryl-MurNAc-(pentapeptide)GlcNAc (lipid intermediate II). The sequence is that of UDP-N-acetylglucosamine--N-acetylmuramyl-(pentapeptide) pyrophosphoryl-undecaprenol N-acetylglucosamine transferase from Escherichia coli (strain K12 / MC4100 / BW2952).